A 106-amino-acid polypeptide reads, in one-letter code: ATP-dependent Clp protease adapter protein ClpS (106 aa).

It belongs to the ClpS family. Binds to the N-terminal domain of the chaperone ClpA.

Functionally, involved in the modulation of the specificity of the ClpAP-mediated ATP-dependent protein degradation. The sequence is that of ATP-dependent Clp protease adapter protein ClpS from Salmonella arizonae (strain ATCC BAA-731 / CDC346-86 / RSK2980).